The primary structure comprises 312 residues: Fe-S cluster assembly protein DRE2 (312 aa).

Positions 7 to 139 (LSDVPRVLLL…VKPVFEEQSV (133 aa)) are N-terminal SAM-like domain. The linker stretch occupies residues 140–204 (LLPFSINRSQ…EDELINEDEL (65 aa)). Positions 214, 225, 228, and 230 each coordinate [2Fe-2S] cluster. Positions 214 to 230 (CRPKAGKRRRACKDCTC) are fe-S binding site A. [4Fe-4S] cluster-binding residues include cysteine 275, cysteine 278, cysteine 286, and cysteine 289. 2 short sequence motifs (cx2C motif) span residues 275–278 (CGNC) and 286–289 (CDGC). The segment at 275 to 289 (CGNCSLGDAFRCDGC) is fe-S binding site B.

The protein belongs to the anamorsin family. Monomer. Interacts with TAH18. Interacts with MIA40. The cofactor is [2Fe-2S] cluster. It depends on [4Fe-4S] cluster as a cofactor.

The protein resides in the cytoplasm. Its subcellular location is the mitochondrion intermembrane space. Its function is as follows. Component of the cytosolic iron-sulfur (Fe-S) protein assembly (CIA) machinery required for the maturation of extramitochondrial Fe-S proteins. Part of an electron transfer chain functioning in an early step of cytosolic Fe-S biogenesis, facilitating the de novo assembly of a [4Fe-4S] cluster on the scaffold complex CFD1-NBP35. Electrons are transferred to DRE2 from NADPH via the FAD- and FMN-containing protein TAH18. TAH18-DRE2 are also required for the assembly of the diferric tyrosyl radical cofactor of ribonucleotide reductase (RNR), probably by providing electrons for reduction during radical cofactor maturation in the catalytic small subunit RNR2. This is Fe-S cluster assembly protein DRE2 from Arthroderma otae (strain ATCC MYA-4605 / CBS 113480) (Microsporum canis).